The primary structure comprises 405 residues: GTPase Obg (405 aa).

The 159-residue stretch at 1-159 (MKFVDEVSIF…RDLKLELKVL (159 aa)) folds into the Obg domain. Residues 127–148 (NTRFKSSTNRAPRQTTPGKPGE) are disordered. Over residues 129–143 (RFKSSTNRAPRQTTP) the composition is skewed to polar residues. Residues 160-333 (ADVGLLGLPN…LCQDIMHYLD (174 aa)) form the OBG-type G domain. Residues 166–173 (GLPNAGKS), 191–195 (FTTLV), 213–216 (DIPG), 283–286 (NKAD), and 314–316 (SAL) contribute to the GTP site. Residues Ser173 and Thr193 each coordinate Mg(2+). Residues 383-398 (ALEDEDDFDDEDDGDG) are compositionally biased toward acidic residues. Positions 383 to 405 (ALEDEDDFDDEDDGDGPEIFYVR) are disordered.

It belongs to the TRAFAC class OBG-HflX-like GTPase superfamily. OBG GTPase family. As to quaternary structure, monomer. Mg(2+) serves as cofactor.

The protein localises to the cytoplasm. An essential GTPase which binds GTP, GDP and possibly (p)ppGpp with moderate affinity, with high nucleotide exchange rates and a fairly low GTP hydrolysis rate. Plays a role in control of the cell cycle, stress response, ribosome biogenesis and in those bacteria that undergo differentiation, in morphogenesis control. The protein is GTPase Obg of Azotobacter vinelandii (strain DJ / ATCC BAA-1303).